We begin with the raw amino-acid sequence, 874 residues long: Collagen alpha-2(I) chain (874 aa).

The segment at 1–874 (SGGFDFSFLP…FGYEGDFYRA (874 aa)) is disordered. Pro-10 and Pro-13 each carry 4-hydroxyproline. The residue at position 16 (Lys-16) is an Allysine. Over residues 27–66 (LMGPRGPPGASGAPGPQGFQGPAGEPGEPGQTGPAGARGP) the composition is skewed to low complexity. 2 positions are modified to 4-hydroxyproline: Pro-34 and Pro-40. Position 93 is a 5-hydroxylysine; alternate (Lys-93). Residue Lys-93 is glycosylated (O-linked (Gal...) hydroxylysine; alternate). Composition is skewed to low complexity over residues 110 to 143 (ARGR…SAGP), 188 to 209 (PGAN…AGAP), and 218 to 236 (PGPV…AGSK). Over residues 237-246 (GESGGKGEPG) the composition is skewed to gly residues. The segment covering 247 to 257 (SAGPQGPPGSS) has biased composition (low complexity). Residues Pro-317 and Pro-320 each carry the 4-hydroxyproline modification. 3 stretches are compositionally biased toward low complexity: residues 346–365 (LPGI…RGEA), 434–451 (PGES…SRGP), and 463–473 (EPGVVGAPGTA). The span at 474-483 (GPAGSGGLPG) shows a compositional bias: gly residues. Composition is skewed to low complexity over residues 491–538 (RGEV…PRGS) and 545–565 (VGPA…QPGA). Residues 566 to 575 (KGERGTKGPK) show a composition bias toward basic and acidic residues. Positions 583–593 (PTGPVGSAGPA) are enriched in low complexity. Residues 603–612 (GSRGDGGPPG) show a composition bias toward gly residues. Positions 614-623 (TGFPGAAGRT) are enriched in low complexity. The span at 648-662 (GPVGRGETGAGGPPG) shows a compositional bias: gly residues. 2 stretches are compositionally biased toward low complexity: residues 663-697 (FTGE…LGLP) and 705-724 (LPGV…AGPP). Gly residues predominate over residues 725-744 (GARGDGNPGSDGPPGRGAAG). 2 stretches are compositionally biased toward low complexity: residues 745 to 755 (APGPHGTVGPA) and 763 to 778 (EPGP…ALGP).

It belongs to the fibrillar collagen family. Trimers of one alpha 2(I) and two alpha 1(I) chains. Interacts (via C-terminus) with TMEM131 (via PapD-L domain); the interaction is direct and is involved in assembly and TRAPPIII ER-to-Golgi transport complex-dependent secretion of collagen. In terms of processing, prolines at the third position of the tripeptide repeating unit (G-X-Y) are hydroxylated in some or all of the chains. As to expression, expressed in bones.

Its subcellular location is the secreted. It localises to the extracellular space. It is found in the extracellular matrix. Its function is as follows. Type I collagen is a member of group I collagen (fibrillar forming collagen). The polypeptide is Collagen alpha-2(I) chain (Megalonyx jeffersonii (Jefferson's ground sloth)).